The chain runs to 303 residues: Bifunctional protein FolD (303 aa).

NADP(+) contacts are provided by residues 165 to 167 (GRS), serine 190, and isoleucine 231.

It belongs to the tetrahydrofolate dehydrogenase/cyclohydrolase family. As to quaternary structure, homodimer.

The catalysed reaction is (6R)-5,10-methylene-5,6,7,8-tetrahydrofolate + NADP(+) = (6R)-5,10-methenyltetrahydrofolate + NADPH. It catalyses the reaction (6R)-5,10-methenyltetrahydrofolate + H2O = (6R)-10-formyltetrahydrofolate + H(+). It functions in the pathway one-carbon metabolism; tetrahydrofolate interconversion. Its function is as follows. Catalyzes the oxidation of 5,10-methylenetetrahydrofolate to 5,10-methenyltetrahydrofolate and then the hydrolysis of 5,10-methenyltetrahydrofolate to 10-formyltetrahydrofolate. This is Bifunctional protein FolD from Prochlorococcus marinus (strain NATL1A).